The chain runs to 1673 residues: Glutamine and serine-rich protein 1 (1673 aa).

Disordered regions lie at residues 265-322, 411-543, 872-892, 923-961, 1050-1081, 1149-1182, 1216-1272, and 1390-1476; these read VIPS…SSQA, DQTR…KSYV, RHMS…LSIN, QDLP…PKEG, DENA…QYSS, VIRP…KAEE, LSAL…EQLA, and KSKV…PPPI. Positions 289–309 are enriched in polar residues; the sequence is SSKTPKSQSVVSPELTQSYTK. Composition is skewed to low complexity over residues 310–322 and 411–458; these read SSQN…SSQA and DQTR…PSDS. Residues 459–539 show a composition bias toward polar residues; sequence YTSGQNQTLA…MQNSRTTADS (81 aa). Over residues 947 to 956 the composition is skewed to polar residues; that stretch reads NIKNPPNVNQ. The span at 1222-1233 shows a compositional bias: basic and acidic residues; sequence NSEKRLKTEGDK. Polar residues-rich tracts occupy residues 1259–1272 and 1397–1411; these read KPSQ…EQLA and ARTT…SKVS. The segment covering 1435-1451 has biased composition (basic and acidic residues); that stretch reads TKAEPPPKKRKQWKEEF. Residues 1452-1462 show a composition bias toward low complexity; that stretch reads SSSQSDSSPDM.

It localises to the chromosome. Functionally, plays an essential role in the protection and maintenance of transcriptional and developmental programs. Protects many bivalent promoters and poised enhancers from hypermethylation, showing a marked preference for these regulatory elements over other types of promoters or enhancers. Mechanistically, cooperates with tet1 and binds to DNA in a common complex to inhibit the binding of dnmt3a/3b and therefore de novo methylation. This Xenopus laevis (African clawed frog) protein is Glutamine and serine-rich protein 1 (qser1).